Reading from the N-terminus, the 406-residue chain is MTEHLPMPQFGPLAGVRVVFSGIEIAGPFAGQMFAEWGAEVIWIENVAWADTIRVQPHYPQLSRRNLHALSLNIFKEEGRDAFLKLMETTDIFIEASKGPAFARRGITDEVLWEHNPKLVIAHLSGFGQYGDPQYTNLPAYNTIAQAFSGYLIQNGDKDQPMPAFPYTADYFSGMTATTSALAALYKVQQTGKGESIDIAMYEVMLRMGQYFMMDYFNGGEICPRMTKGKDPYYAGCGLYRCQDGYIVMEVVGITQIEEIFKDIGLAHLLGTPEVPKGTQLIHRINCPHGQLFEDKLDEWLANQPITAVLKRLSELNIASAKVLTIPELEGNPQYVARESITQWKTMSGETCKGPNIMPKFKNNPGKIWRGMPAHGMDTNAILKNIGYSDEQIRELVDKGLAKIVE.

CoA-binding residues include K98 and R105. D170 serves as the catalytic Nucleophile.

It belongs to the CoA-transferase III family. CaiB subfamily. As to quaternary structure, homodimer.

The protein localises to the cytoplasm. It catalyses the reaction crotonobetainyl-CoA + (R)-carnitine = crotonobetaine + (R)-carnitinyl-CoA. It carries out the reaction 4-(trimethylamino)butanoyl-CoA + (R)-carnitine = (R)-carnitinyl-CoA + 4-(trimethylamino)butanoate. Its pathway is amine and polyamine metabolism; carnitine metabolism. In terms of biological role, catalyzes the reversible transfer of the CoA moiety from gamma-butyrobetainyl-CoA to L-carnitine to generate L-carnitinyl-CoA and gamma-butyrobetaine. Is also able to catalyze the reversible transfer of the CoA moiety from gamma-butyrobetainyl-CoA or L-carnitinyl-CoA to crotonobetaine to generate crotonobetainyl-CoA. The sequence is that of L-carnitine CoA-transferase from Proteus mirabilis (strain HI4320).